The sequence spans 225 residues: Protein-L-isoaspartate O-methyltransferase 2 (225 aa).

The active site involves Ser-73.

The protein belongs to the methyltransferase superfamily. L-isoaspartyl/D-aspartyl protein methyltransferase family.

It is found in the cytoplasm. The catalysed reaction is [protein]-L-isoaspartate + S-adenosyl-L-methionine = [protein]-L-isoaspartate alpha-methyl ester + S-adenosyl-L-homocysteine. Its function is as follows. Catalyzes the methyl esterification of L-isoaspartyl residues in peptides and proteins that result from spontaneous decomposition of normal L-aspartyl and L-asparaginyl residues. It plays a role in the repair and/or degradation of damaged proteins. The sequence is that of Protein-L-isoaspartate O-methyltransferase 2 from Pelobacter propionicus (strain DSM 2379 / NBRC 103807 / OttBd1).